The chain runs to 79 residues: Acyl carrier protein (79 aa).

In terms of domain architecture, Carrier spans 2 to 77; that stretch reads DNIEQRVKKI…QAIDYATAHV (76 aa). Ser-37 is subject to O-(pantetheine 4'-phosphoryl)serine.

Belongs to the acyl carrier protein (ACP) family. 4'-phosphopantetheine is transferred from CoA to a specific serine of apo-ACP by AcpS. This modification is essential for activity because fatty acids are bound in thioester linkage to the sulfhydryl of the prosthetic group.

The protein localises to the cytoplasm. Its pathway is lipid metabolism; fatty acid biosynthesis. Functionally, carrier of the growing fatty acid chain in fatty acid biosynthesis. The protein is Acyl carrier protein of Cupriavidus pinatubonensis (strain JMP 134 / LMG 1197) (Cupriavidus necator (strain JMP 134)).